A 553-amino-acid polypeptide reads, in one-letter code: 3-amino-2-hydroxy-4-methoxybenzoate diazotase (553 aa).

Low complexity predominate over residues 157-167 (ALPAAGATGPA). Residues 157–178 (ALPAAGATGPAREGDAPPPAPV) are disordered.

The protein belongs to the ATP-dependent AMP-binding enzyme family.

It catalyses the reaction 3-amino-2-hydroxy-4-methoxybenzoate + nitrite + ATP = cremeomycin + AMP + diphosphate + H2O. Its pathway is antibiotic biosynthesis. In terms of biological role, part of a gene cluster involved in the biosynthesis of cremeomycin, a light-sensitive o-diazoquinone with antibacterial and antiproliferative effects. Catalyzes the last step of cremeomycin biosynthesis, the diazotization of 3-amino-2-hydroxy-4-methoxybenzoate (3,2,4-AHMBA) with nitrite to generate cremeomycin. This chain is 3-amino-2-hydroxy-4-methoxybenzoate diazotase, found in Streptomyces cremeus.